The primary structure comprises 421 residues: O-glycoside alpha-1,2-mannosyltransferase homolog 5 (421 aa).

Residue glutamate 318 is the Nucleophile of the active site.

It belongs to the glycosyltransferase 15 family.

It is found in the cytoplasm. Probable mannosyltransferase involved in O-glycosylation of cell wall and secreted proteins. The sequence is that of O-glycoside alpha-1,2-mannosyltransferase homolog 5 (omh5) from Schizosaccharomyces pombe (strain 972 / ATCC 24843) (Fission yeast).